The following is a 423-amino-acid chain: MKDLTSSDADALIADLGQKARAAAAVLAEASAERKHAALIGAADAILEAEDAILDANAEDMHYAEEKGLSPAMLDRLKLDPARIRAMAEGLRSVAAQADPVGKVLAEWDRPNGLNIRRVATPLGVIGVVYESRPNVTADAAALALKAGNAVILRGGSESLNSSAAIHRALVTGLKQAGLPETAIQMVPTRDREAVAAMLRAQDYIDVIVPRGGKGLVGLVQKEARVPVFAHLEGICHVYADRDADLDKARRVVLNAKTRRTGICGAAECLLIDWQFYTKHGPVLVQDLLDAGVEVRAEGELAKVPGTVPAEPSDFGQEFLDKIIAVKLVDGVEEAIAHIRRHGSGHTESILTENDATAERFFSGLDSAILMRNASTQFADGGEFGMGAEIGIATGKMHARGPVGAEQLTSFKYLVTGDGTIRP.

This sequence belongs to the gamma-glutamyl phosphate reductase family.

It is found in the cytoplasm. The enzyme catalyses L-glutamate 5-semialdehyde + phosphate + NADP(+) = L-glutamyl 5-phosphate + NADPH + H(+). It participates in amino-acid biosynthesis; L-proline biosynthesis; L-glutamate 5-semialdehyde from L-glutamate: step 2/2. Its function is as follows. Catalyzes the NADPH-dependent reduction of L-glutamate 5-phosphate into L-glutamate 5-semialdehyde and phosphate. The product spontaneously undergoes cyclization to form 1-pyrroline-5-carboxylate. In Paracoccus denitrificans (strain Pd 1222), this protein is Gamma-glutamyl phosphate reductase.